A 388-amino-acid polypeptide reads, in one-letter code: Protein FAM199X (388 aa).

Residues 288 to 312 are compositionally biased toward low complexity; sequence SMVSSASSSGSSVGNSASNSSANMS. Positions 288 to 358 are disordered; that stretch reads SMVSSASSSG…QLKEQRQARK (71 aa). Residues serine 316 and serine 321 each carry the phosphoserine modification. A compositionally biased stretch (basic residues) spans 330–349; that stretch reads DSKKRSKQRKLQQKAFRKRQ.

The protein belongs to the FAM199 family.

This chain is Protein FAM199X (Fam199x), found in Mus musculus (Mouse).